We begin with the raw amino-acid sequence, 141 residues long: Large ribosomal subunit protein uL16 (141 aa).

The protein belongs to the universal ribosomal protein uL16 family. Part of the 50S ribosomal subunit.

Binds 23S rRNA and is also seen to make contacts with the A and possibly P site tRNAs. The protein is Large ribosomal subunit protein uL16 of Deinococcus geothermalis (strain DSM 11300 / CIP 105573 / AG-3a).